We begin with the raw amino-acid sequence, 492 residues long: Probable Xaa-Pro aminopeptidase ACLA_020440 (492 aa).

Positions 272, 283, 421, and 460 each coordinate Mn(2+).

The protein belongs to the peptidase M24B family. Mn(2+) serves as cofactor.

It carries out the reaction Release of any N-terminal amino acid, including proline, that is linked to proline, even from a dipeptide or tripeptide.. Functionally, catalyzes the removal of a penultimate prolyl residue from the N-termini of peptides. This chain is Probable Xaa-Pro aminopeptidase ACLA_020440, found in Aspergillus clavatus (strain ATCC 1007 / CBS 513.65 / DSM 816 / NCTC 3887 / NRRL 1 / QM 1276 / 107).